Reading from the N-terminus, the 417-residue chain is Dibenzothiophene monooxygenase (417 aa).

Residues 18–124 form a helical N-terminus region; that stretch reads NDPVAVARGL…HLYTQIAQNN (107 aa). Residues Tyr-96, 129–134, 159–163, Arg-282, 369–370, and His-391 each bind FMN; these read NASSEN, KHFCS, and AR. The central beta-barrel N-terminus stretch occupies residues 125–233; that stretch reads WWTGNASSEN…KVEPDEVLGA (109 aa). The interval 131–142 is lid loop; the sequence is SSENNSHVLDWK. The segment at 234–417 is helical C-terminus; it reads PNAFVLAFIQ…GQYPIPGFTS (184 aa).

Belongs to the DszC flavin monooxygenase family. As to quaternary structure, homotetramer formed by a dimer of dimers; FMN binds between monomers of the homodimer.

It is found in the cytoplasm. The enzyme catalyses dibenzothiophene + 2 FMNH2 + 2 O2 = dibenzothiophene 5,5-dioxide + 2 FMN + 2 H2O + 2 H(+). The catalysed reaction is dibenzothiophene + FMNH2 + O2 = dibenzothiophene 5-oxide + FMN + H2O + H(+). It catalyses the reaction dibenzothiophene 5-oxide + FMNH2 + O2 = dibenzothiophene 5,5-dioxide + FMN + H2O + H(+). Its pathway is sulfur metabolism; dibenzothiophene degradation. DBT degradation completely inhibited by Cu(2+), Mn(2+), p-chloromercuribenzoic acid, 2,2-bipyridyl, 1,10-phenanthroline, and strongly inhibited by Zn(2+), 5,5'- Dithiobis(2-nitrobenzoic acid) and 8-quinolinol. In terms of biological role, catalyzes the first step of the '4S' desulfurization pathway that removes covalently bound sulfur from dibenzothiophene (DBT) without breaking carbon-carbon bonds. Sulfur dioxygenase which converts DBT to DBT-sulfone (DBTO2 or DBT 5,5-dioxide) in a stepwise manner. Also acts on thioxanthen-9-one and 4,6-dimethyl DBT and 2,8-dimethyl DBT. In Rhodococcus erythropolis (Arthrobacter picolinophilus), this protein is Dibenzothiophene monooxygenase.